The following is a 711-amino-acid chain: Early transcription factor 82 kDa subunit (711 aa).

This sequence belongs to the poxviridae VETF large subunit family. In terms of assembly, heterodimer of a 70 kDa and a 82 kDa subunit. Part of the early transcription complex composed of ETF, RAP94, and the DNA-directed RNA polymerase.

The protein resides in the virion. Acts with RNA polymerase to initiate transcription from early gene promoters. Is recruited by the RPO-associated protein of 94 kDa (RAP94) to form the early transcription complex, which also contains the core RNA polymerase. ETF heterodimer binds to early gene promoters. The protein is Early transcription factor 82 kDa subunit (VETFL) of Oryctolagus cuniculus (Rabbit).